We begin with the raw amino-acid sequence, 118 residues long: Large ribosomal subunit protein uL24 (118 aa).

A disordered region spans residues 1–24; that stretch reads MSEQPHKQRTRTKRASLHEKQDQV.

This sequence belongs to the universal ribosomal protein uL24 family. Part of the 50S ribosomal subunit.

One of two assembly initiator proteins, it binds directly to the 5'-end of the 23S rRNA, where it nucleates assembly of the 50S subunit. Functionally, located at the polypeptide exit tunnel on the outside of the subunit. This Halobacterium salinarum (strain ATCC 700922 / JCM 11081 / NRC-1) (Halobacterium halobium) protein is Large ribosomal subunit protein uL24.